The following is a 55-amino-acid chain: Cop-6 protein (55 aa).

It belongs to the transcriptional regulatory CopG/NikR family.

Functionally, acts in trans as a negative regulatory element in pE194 replication. The chain is Cop-6 protein from Staphylococcus aureus.